The following is a 214-amino-acid chain: tRNA (guanine-N(7)-)-methyltransferase (214 aa).

S-adenosyl-L-methionine is bound by residues E45, E70, D97, and D119. Residue D119 is part of the active site. Residues K123, D155, and 192–195 contribute to the substrate site; that span reads TEYE.

It belongs to the class I-like SAM-binding methyltransferase superfamily. TrmB family.

The catalysed reaction is guanosine(46) in tRNA + S-adenosyl-L-methionine = N(7)-methylguanosine(46) in tRNA + S-adenosyl-L-homocysteine. Its pathway is tRNA modification; N(7)-methylguanine-tRNA biosynthesis. In terms of biological role, catalyzes the formation of N(7)-methylguanine at position 46 (m7G46) in tRNA. This is tRNA (guanine-N(7)-)-methyltransferase from Clostridioides difficile (strain 630) (Peptoclostridium difficile).